The primary structure comprises 420 residues: Anaerobic glycerol-3-phosphate dehydrogenase subunit B (420 aa).

This sequence belongs to the anaerobic G-3-P dehydrogenase subunit B family. As to quaternary structure, composed of a catalytic GlpA/B dimer and of membrane bound GlpC. Requires FMN as cofactor.

The catalysed reaction is a quinone + sn-glycerol 3-phosphate = dihydroxyacetone phosphate + a quinol. It functions in the pathway polyol metabolism; glycerol degradation via glycerol kinase pathway; glycerone phosphate from sn-glycerol 3-phosphate (anaerobic route): step 1/1. Conversion of glycerol 3-phosphate to dihydroxyacetone. Uses fumarate or nitrate as electron acceptor. This is Anaerobic glycerol-3-phosphate dehydrogenase subunit B from Pectobacterium atrosepticum (strain SCRI 1043 / ATCC BAA-672) (Erwinia carotovora subsp. atroseptica).